An 834-amino-acid chain; its full sequence is ATP-dependent 6-phosphofructokinase (834 aa).

The segment at 1-426 is N-terminal catalytic PFK domain 1; it reads MTTTSKIIND…FYEIFIACSN (426 aa). ATP-binding positions include glycine 62, 123 to 124, and 153 to 156; these read RS and GDGS. Aspartate 154 contributes to the Mg(2+) binding site. Substrate-binding positions include 199–201, arginine 236, 243–245, glutamate 299, arginine 326, and 332–335; these read SID, MGR, and HVQR. The active-site Proton acceptor is the aspartate 201. The segment at 427-437 is interdomain linker; it reads LHRRKVESKGM. Positions 438-834 are C-terminal regulatory PFK domain 2; the sequence is GVLILHSGGP…DPNVNPQFTL (397 aa). Beta-D-fructose 2,6-bisphosphate is bound by residues arginine 507, 566-570, arginine 603, 610-612, glutamate 666, arginine 692, 698-701, and arginine 764; these read TIANN, MGA, and HLQQ. A disordered region spans residues 799–834; the sequence is SNLSEQDRPIKKSDISSPTSYSQKTFDPNVNPQFTL. A compositionally biased stretch (basic and acidic residues) spans 803 to 812; sequence EQDRPIKKSD. The span at 813 to 834 shows a compositional bias: polar residues; sequence ISSPTSYSQKTFDPNVNPQFTL.

Belongs to the phosphofructokinase type A (PFKA) family. ATP-dependent PFK group I subfamily. Eukaryotic two domain clade 'E' sub-subfamily. Homotetramer. Mg(2+) serves as cofactor. In terms of processing, the N-terminus is blocked.

Its subcellular location is the cytoplasm. The enzyme catalyses beta-D-fructose 6-phosphate + ATP = beta-D-fructose 1,6-bisphosphate + ADP + H(+). The protein operates within carbohydrate degradation; glycolysis; D-glyceraldehyde 3-phosphate and glycerone phosphate from D-glucose: step 3/4. Its activity is regulated as follows. Allosterically activated by ADP, AMP, or fructose 2,6-bisphosphate, and allosterically inhibited by ATP or citrate. In terms of biological role, catalyzes the phosphorylation of D-fructose 6-phosphate to fructose 1,6-bisphosphate by ATP, the first committing step of glycolysis. This is ATP-dependent 6-phosphofructokinase (pfkA) from Dictyostelium discoideum (Social amoeba).